Consider the following 490-residue polypeptide: Protein twist (490 aa).

3 disordered regions span residues 48–72, 96–165, and 244–264; these read QLQHQQQHLHSHQHHQQHHQQQHAQ, PSNE…TGGS, and QQQQSQQLQQQQPHQQSHAQM. Residues 54–68 are compositionally biased toward basic residues; sequence QHLHSHQHHQQHHQQ. Low complexity-rich tracts occupy residues 102–134 and 244–263; these read STSSNQSAQSTSLELNNNNTSSNTNSSGNNPSG and QQQQSQQLQQQQPHQQSHAQ. Phosphoserine occurs at positions 325 and 328. Residues 330 to 361 are disordered; it reads LDGSDAGGKAFRKPRRRLKRKPSKTEETDEFS. The segment covering 339–351 has biased composition (basic residues); it reads AFRKPRRRLKRKP. Positions 362–413 constitute a bHLH domain; that stretch reads NQRVMANVRERQRTQSLNDAFKSLQQIIPTLPSDKLSKIQTLKLATRYIDFL.

In terms of assembly, efficient DNA binding requires dimerization with another bHLH protein. Homodimer. Interacts with akirin. Expressed in embryonic abdomen; a single cell ventrally, pairs of cells laterally and three cells dorsally in each hemisegment. In the thorax, there are patches of cells associated with the imaginal disks. During larval development, cells proliferate and, in the abdomen, they form ventral, lateral and dorsal clusters, which are the precursors of the adult abdominal muscles. In the thorax, they form populations of cells in the imaginal disks that correspond to the adepithelial cells.

It is found in the nucleus. In terms of biological role, involved in the establishment and dorsoventral patterning of germ layers in the embryo. This is Protein twist (twi) from Drosophila melanogaster (Fruit fly).